Here is an 891-residue protein sequence, read N- to C-terminus: Fanconi-associated nuclease 1 homolog (891 aa).

Glu-712, Asp-833, Glu-852, and Val-853 together coordinate Mn(2+). One can recognise a VRR-NUC domain in the interval 770–884 (GMAEEILIIS…GFNVEICKVR (115 aa)).

It belongs to the FAN1 family. Mn(2+) serves as cofactor. Mg(2+) is required as a cofactor.

The protein resides in the nucleus. It catalyses the reaction Hydrolytically removes 5'-nucleotides successively from the 3'-hydroxy termini of 3'-hydroxy-terminated oligonucleotides.. In terms of biological role, nuclease required for the repair of DNA interstrand cross-links (ICLs). Acts as a 5'-3' exonuclease that anchors at a cut end of DNA and cleaves DNA successively at every third nucleotide, allowing to excise an ICL from one strand through flanking incisions. May act upstream of the helicase RECQL4A and the ATPase RAD5A, which is involved in error-free post-replicative repair. Functions independently of MUS81 pathway, but in a similar pathway with RECQ4A, RAD5A and MFH1 in ICL repair. This is Fanconi-associated nuclease 1 homolog from Arabidopsis thaliana (Mouse-ear cress).